We begin with the raw amino-acid sequence, 96 residues long: Uteroglobin (96 aa).

The N-terminal stretch at 1 to 21 (MKIAITITVVMLSICCSSASS) is a signal peptide.

It belongs to the secretoglobin family. As to quaternary structure, antiparallel homodimer; disulfide-linked. Interaction with LMBR1L is controversial. Club cells (nonciliated cells of the surface epithelium of the pulmonary airways).

It localises to the secreted. Functionally, binds phosphatidylcholine, phosphatidylinositol, polychlorinated biphenyls (PCB) and weakly progesterone, potent inhibitor of phospholipase A2. This chain is Uteroglobin (Scgb1a1), found in Mus musculus (Mouse).